Here is a 468-residue protein sequence, read N- to C-terminus: 3-isopropylmalate dehydratase large subunit (468 aa).

[4Fe-4S] cluster is bound by residues cysteine 348, cysteine 409, and cysteine 412.

This sequence belongs to the aconitase/IPM isomerase family. LeuC type 1 subfamily. As to quaternary structure, heterodimer of LeuC and LeuD. [4Fe-4S] cluster serves as cofactor.

The catalysed reaction is (2R,3S)-3-isopropylmalate = (2S)-2-isopropylmalate. It participates in amino-acid biosynthesis; L-leucine biosynthesis; L-leucine from 3-methyl-2-oxobutanoate: step 2/4. Catalyzes the isomerization between 2-isopropylmalate and 3-isopropylmalate, via the formation of 2-isopropylmaleate. The chain is 3-isopropylmalate dehydratase large subunit from Dechloromonas aromatica (strain RCB).